The chain runs to 253 residues: Oxidoreductase AOL_s00215g277 (253 aa).

Residues 181–203 (FFGYWLTVILGYYIGSLLGYQPF) traverse the membrane as a helical segment.

The protein belongs to the oxidoreductase OpS7 family.

The protein localises to the membrane. The protein operates within secondary metabolite biosynthesis; terpenoid biosynthesis. Functionally, oxidoreductase; part of the gene cluster that mediates the biosynthesis of sesquiterpenyl epoxy-cyclohexenoids (SECs) such as anthrobotrisins and arthrosporols, metabolites that possess a novel hybrid carbon skeleton consisting of a polyketide-derived epoxycyclohexenol combined with a terpenoid-derived monocyclic sesquiterpenol substructure (PKS-PTS hybrid). The SEC pathway plays an important role for fungal soil colonization via decreasing fungal nematode-capturing ability. Within the pathway, the oxidoreductase AOL_s00215g277 seems to play a role in the farnesylation step of toluquinol to produce farnesyl hydroquinone, the hybrid precursor for biosynthesis of SECs. The pathway begins with the biosynthesis of 6-methylsalicylic acid (6-MSA), the first precursor of the polyketide-derived epoxycyclohexenol in arthrosporols, by the polyketide synthase (PKS) AOL_s00215g283 via condensation of 1 acetate and 3 malonate units. The 6-methylsalicylic acid decarboxylase AOL_s00215g281 then catalyzes the decarboxylation of 6-methylsalicylic acid to yield m-cresol. The cytochrome P450 monooxygenase AOL_s00215g282 further oxidizes m-cresol to yield toluquinol. With the assistance of the oxidoreductase AOL_s00215g277, the polyprenyl transferase AOL_s00215g276 catalyzes the farnesylation of toluquinol to produce farnesyl hydroquinone, the hybrid precursor for biosynthesis of SECs. Farnesyl hydroquinone undergoes epoxidation and then subsequent dehydrogenation to form farnesyl epoxy-quinone, the first and simplest SEC. The cytochrome P450 monooxygenase AOL_s00215g278 and the FAD-dependent monooxygenase AOL_s00215g279 might be involved in the oxygenation of the phenol moiety, most likely in the epoxy formation. The cytochrome P450 monooxygenases AOL_s00215g274 and AOL_s00215g280 are involved in specific regional ketone reductions at respectively C-4 and C-1 of farnesyl epoxy-quinone PubMed:33823587. This is Oxidoreductase AOL_s00215g277 from Arthrobotrys oligospora (strain ATCC 24927 / CBS 115.81 / DSM 1491) (Nematode-trapping fungus).